A 231-amino-acid polypeptide reads, in one-letter code: 6-hydroxymethyl-7,8-dihydropterin pyrophosphokinase (231 aa).

The protein belongs to the archaeal 6-HMPDK family. Requires Mg(2+) as cofactor.

The catalysed reaction is 6-hydroxymethyl-7,8-dihydropterin + ATP = (7,8-dihydropterin-6-yl)methyl diphosphate + AMP + H(+). Functionally, catalyzes the transfer of diphosphate from ATP to 6-hydroxymethyl-7,8-dihydropterin (6-HMD), leading to 6-hydroxymethyl-7,8-dihydropterin diphosphate (6-HMDP). To a lesser extent, can also use CTP, UTP, and GTP as the nucleotide triphosphate substrate. The protein is 6-hydroxymethyl-7,8-dihydropterin pyrophosphokinase of Pyrococcus furiosus (strain ATCC 43587 / DSM 3638 / JCM 8422 / Vc1).